A 117-amino-acid chain; its full sequence is Glycine cleavage system H-like protein (117 aa).

In terms of domain architecture, Lipoyl-binding spans 21–103; it reads IVKLGLSSQM…ESEGWFVVLQ (83 aa). Lysine 62 is subject to N6-lipoyllysine.

Belongs to the GcvH family. Requires (R)-lipoate as cofactor.

The protein is Glycine cleavage system H-like protein of Chlamydia trachomatis serovar D (strain ATCC VR-885 / DSM 19411 / UW-3/Cx).